The sequence spans 504 residues: Maturase K (504 aa).

It belongs to the intron maturase 2 family. MatK subfamily.

It is found in the plastid. The protein resides in the chloroplast. Its function is as follows. Usually encoded in the trnK tRNA gene intron. Probably assists in splicing its own and other chloroplast group II introns. This Adenostoma fasciculatum (Chamise) protein is Maturase K.